A 608-amino-acid chain; its full sequence is Growth hormone receptor (608 aa).

Residues 1 to 16 (MDLRHLLFTLALVCAN) form the signal peptide. Residues 17–237 (DSLSASDDLL…EFVHCAEEIE (221 aa)) are Extracellular-facing. 2 cysteine pairs are disulfide-bonded: cysteine 34–cysteine 44 and cysteine 72–cysteine 83. Asparagine 86 carries N-linked (GlcNAc...) asparagine glycosylation. Cysteine 97 and cysteine 111 are joined by a disulfide. The region spanning 122–226 (PPVHLNWTLL…ILYVSFTQAG (105 aa)) is the Fibronectin type-III domain. 3 N-linked (GlcNAc...) asparagine glycosylation sites follow: asparagine 127, asparagine 132, and asparagine 171. The WSXWS motif signature appears at 211-215 (FGEFS). The chain crosses the membrane as a helical span at residues 238–261 (FPWFLVVVFGVCGLAVTAILILLS). Residues 262 to 608 (KQPRLKMLIF…STDQLNKIMP (347 aa)) are Cytoplasmic-facing. The tract at residues 267-352 (KMLIFPPVPV…HLKSHSCLGA (86 aa)) is required for JAK2 binding. The Box 1 motif motif lies at 270-278 (IFPPVPVPK). The short motif at 313-322 (DLWVEFIELD) is the UbE motif element. Polar residues-rich tracts occupy residues 413–426 (ANTDTQQPHTSTQS) and 438–451 (STDSANPSVQTQLS). The tract at residues 413-451 (ANTDTQQPHTSTQSESRESWPPFADSTDSANPSVQTQLS) is disordered.

This sequence belongs to the type I cytokine receptor family. Type 1 subfamily. In terms of processing, on GH binding, proteolytically cleaved, in vitro, to produce GHBP. In terms of tissue distribution, broad specificity.

The protein resides in the cell membrane. It is found in the secreted. In terms of biological role, receptor for pituitary gland growth hormone (GH1) involved in regulating postnatal body growth. On ligand binding, couples to the JAK2/STAT5 pathway. Its function is as follows. The soluble form (GHBP) acts as a reservoir of growth hormone in plasma and may be a modulator/inhibitor of GH signaling. The polypeptide is Growth hormone receptor (GHR) (Gallus gallus (Chicken)).